The chain runs to 579 residues: 2-isopropylmalate synthase (579 aa).

In terms of domain architecture, Pyruvate carboxyltransferase spans 40–314; that stretch reads PRWCAVDLRD…DPMIDFSDID (275 aa). Mg(2+)-binding residues include Asp49, His253, His255, and Asn289. The tract at residues 456-579 is regulatory domain; the sequence is SGKADGQWGR…VNRAIRDAQS (124 aa).

This sequence belongs to the alpha-IPM synthase/homocitrate synthase family. LeuA type 2 subfamily. In terms of assembly, homodimer. Mg(2+) is required as a cofactor.

Its subcellular location is the cytoplasm. It catalyses the reaction 3-methyl-2-oxobutanoate + acetyl-CoA + H2O = (2S)-2-isopropylmalate + CoA + H(+). The protein operates within amino-acid biosynthesis; L-leucine biosynthesis; L-leucine from 3-methyl-2-oxobutanoate: step 1/4. Catalyzes the condensation of the acetyl group of acetyl-CoA with 3-methyl-2-oxobutanoate (2-ketoisovalerate) to form 3-carboxy-3-hydroxy-4-methylpentanoate (2-isopropylmalate). In Pseudarthrobacter chlorophenolicus (strain ATCC 700700 / DSM 12829 / CIP 107037 / JCM 12360 / KCTC 9906 / NCIMB 13794 / A6) (Arthrobacter chlorophenolicus), this protein is 2-isopropylmalate synthase.